The chain runs to 199 residues: MARCKS-related protein (199 aa).

The disordered stretch occupies residues 1-199 (MGSQSSKAPR…PTPAGAEQNE (199 aa)). A lipid anchor (N-myristoyl glycine) is attached at Gly-2. Residue Thr-14 is modified to Phosphothreonine. The segment covering 16–26 (EEAAGASPAKA) has biased composition (low complexity). Ser-22, Ser-36, and Ser-48 each carry phosphoserine. A compositionally biased stretch (low complexity) spans 53-64 (GTDEAAGATGDA). Position 71 is a phosphoserine (Ser-71). Positions 76–85 (AKGDAPPKET) are enriched in basic and acidic residues. Residue Thr-85 is modified to Phosphothreonine. Positions 86 to 98 (PKKKKKFSFKKPF) are enriched in basic residues. The segment at 87-110 (KKKKKFSFKKPFKLSGLSFKRNRK) is effector domain involved in lipid-binding and calmodulin-binding. Ser-93, Ser-101, and Ser-104 each carry phosphoserine; by PKC. Position 119 is a phosphoserine (Ser-119). Ser-120 bears the Phosphoserine; by MAPK8 mark. Residue Ser-135 is modified to Phosphoserine. The residue at position 148 (Thr-148) is a Phosphothreonine; by MAPK8. Ser-151 carries the phosphoserine modification. The span at 156–167 (AKGAEAGAACKG) shows a compositional bias: low complexity. Residue Thr-170 is modified to Phosphothreonine. Low complexity predominate over residues 181 to 199 (STPSGPESGPTPAGAEQNE). Thr-182 is subject to Phosphothreonine; by MAPK8. Position 191 is a phosphothreonine (Thr-191).

This sequence belongs to the MARCKS family. Binds to filamentous actin (F-actin), but not to monomeric G-actin, independently of its phosphorylation status. Interacts with calmodulin. Phosphorylated. Phosphorylation at Ser-120 and Thr-182 is non-redundantly catalyzed by MAPK8 in vivo. Phosphorylation at Thr-148 is preferentially catalyzed by MAPK8 in vivo, but this modification can also be catalyzed by other kinases in the absence of MAPK8. May be phosphorylated by protein kinase C, which disrupts the interaction with calmodulin.

It localises to the cytoplasm. The protein localises to the cytoskeleton. Its subcellular location is the cell membrane. In terms of biological role, controls cell movement by regulating actin cytoskeleton homeostasis and filopodium and lamellipodium formation. When unphosphorylated, induces cell migration. When phosphorylated by MAPK8, induces actin bundles formation and stabilization, thereby reducing actin plasticity, hence restricting cell movement, including neuronal migration. May be involved in coupling the protein kinase C and calmodulin signal transduction systems. The polypeptide is MARCKS-related protein (MARCKSL1) (Oryctolagus cuniculus (Rabbit)).